The following is a 360-amino-acid chain: Terpene synthase 5 (360 aa).

The short motif at 87-92 (DDFLER) is the DDxx(x)D/E motif element. The NDxxSxxxD/E motif motif lies at 237–245 (NDCVSYAKE).

It belongs to the terpene synthase family.

In terms of biological role, terpene synthase that converts its substrate farnesyl diphosphate (FPP) into 2 yet unidentified sesquiterpenes. The protein is Terpene synthase 5 of Dictyostelium purpureum (Slime mold).